Here is a 145-residue protein sequence, read N- to C-terminus: FAD synthase (145 aa).

Residues 5–6 (TF), 10–13 (HPGH), Asp-92, and Tyr-119 contribute to the ATP site.

The protein belongs to the archaeal FAD synthase family. In terms of assembly, homodimer. It depends on a divalent metal cation as a cofactor.

The enzyme catalyses FMN + ATP + H(+) = FAD + diphosphate. It functions in the pathway cofactor biosynthesis; FAD biosynthesis; FAD from FMN: step 1/1. In terms of biological role, catalyzes the transfer of the AMP portion of ATP to flavin mononucleotide (FMN) to produce flavin adenine dinucleotide (FAD) coenzyme. This chain is FAD synthase, found in Methanothermus fervidus (strain ATCC 43054 / DSM 2088 / JCM 10308 / V24 S).